A 265-amino-acid chain; its full sequence is 3-methyl-2-oxobutanoate hydroxymethyltransferase (265 aa).

Mg(2+) contacts are provided by D44 and D83. 3-methyl-2-oxobutanoate contacts are provided by residues 44 to 45 (DS), D83, and K113. E115 contributes to the Mg(2+) binding site. The active-site Proton acceptor is E183.

It belongs to the PanB family. Homodecamer; pentamer of dimers. Mg(2+) is required as a cofactor.

It is found in the cytoplasm. It carries out the reaction 3-methyl-2-oxobutanoate + (6R)-5,10-methylene-5,6,7,8-tetrahydrofolate + H2O = 2-dehydropantoate + (6S)-5,6,7,8-tetrahydrofolate. Its pathway is cofactor biosynthesis; (R)-pantothenate biosynthesis; (R)-pantoate from 3-methyl-2-oxobutanoate: step 1/2. Its function is as follows. Catalyzes the reversible reaction in which hydroxymethyl group from 5,10-methylenetetrahydrofolate is transferred onto alpha-ketoisovalerate to form ketopantoate. The protein is 3-methyl-2-oxobutanoate hydroxymethyltransferase of Leptospira interrogans serogroup Icterohaemorrhagiae serovar copenhageni (strain Fiocruz L1-130).